The chain runs to 340 residues: HPr kinase/phosphorylase (340 aa).

Catalysis depends on residues histidine 153 and lysine 174. 168-175 (GNSGLGKS) provides a ligand contact to ATP. Mg(2+) is bound at residue serine 175. The Proton acceptor; for phosphorylation activity. Proton donor; for dephosphorylation activity role is filled by aspartate 192. The interval 216–225 (MEIRGLGVVD) is important for the catalytic mechanism of both phosphorylation and dephosphorylation. Mg(2+) is bound at residue glutamate 217. Arginine 258 is an active-site residue. Residues 279–284 (PINPGK) are important for the catalytic mechanism of dephosphorylation.

This sequence belongs to the HPrK/P family. In terms of assembly, homohexamer. Mg(2+) serves as cofactor.

The catalysed reaction is [HPr protein]-L-serine + ATP = [HPr protein]-O-phospho-L-serine + ADP + H(+). It catalyses the reaction [HPr protein]-O-phospho-L-serine + phosphate + H(+) = [HPr protein]-L-serine + diphosphate. Functionally, catalyzes the ATP- as well as the pyrophosphate-dependent phosphorylation of a specific serine residue in HPr, a phosphocarrier protein of the phosphoenolpyruvate-dependent sugar phosphotransferase system (PTS). HprK/P also catalyzes the pyrophosphate-producing, inorganic phosphate-dependent dephosphorylation (phosphorolysis) of seryl-phosphorylated HPr (P-Ser-HPr). The protein is HPr kinase/phosphorylase of Prosthecochloris aestuarii (strain DSM 271 / SK 413).